Reading from the N-terminus, the 504-residue chain is MSSKGIQKKTKAVDATKKLAEKIKKQALKQKALASASSAASTKESLPVSETISISTSETPVSDVSELSNKEDLSTKKDQSSASSSSSTSSSSSPPSVQSFTEFDLVPELLESIQSLKYTQPTPIQAAAIPHALQGKDIVGIAETGSGKTAAFAIPILQTLYTAAQPYYALVLAPTRELAFQIKETFDALGSSMGLRSVCIIGGMSMMEQARDLMRKPHVIIATPGRLIDHLEHTKGFSLKKLQYLVMDEVDRMIDLDYAKAIDQILKQIPSHQRITYLYTATMSREIEKFKRSLNSPVQVEIVKLEKVPDKLKQTMCLTSPNTKDTRLIQIVNLDSMKRVIIFTRTVVHTRRCCLMLLNLGFKCVELHGQMPQSRRLGAINKFKAGTPILVATDVAARGLDIPAVDLVINYDIPDPTLYIHRVGRTARAGKAGKAISLVTQYDLESYLRIENTLGTKLPKEDLPLDEMQGLQVSVDRALSKAIQMLRNEENDNKLRHRGRSNNK.

Residues 34–62 are compositionally biased toward low complexity; the sequence is ASASSAASTKESLPVSETISISTSETPVS. The interval 34 to 99 is disordered; the sequence is ASASSAASTK…SSSSPPSVQS (66 aa). The span at 68-79 shows a compositional bias: basic and acidic residues; sequence SNKEDLSTKKDQ. The span at 80-99 shows a compositional bias: low complexity; that stretch reads SSASSSSSTSSSSSPPSVQS. The short motif at 98–126 is the Q motif element; it reads QSFTEFDLVPELLESIQSLKYTQPTPIQA. Residues 129-301 form the Helicase ATP-binding domain; it reads IPHALQGKDI…RSLNSPVQVE (173 aa). 142 to 149 contacts ATP; it reads AETGSGKT. The DEAD box motif lies at 248–251; it reads DEVD. Residues 327 to 471 enclose the Helicase C-terminal domain; sequence RLIQIVNLDS…DLPLDEMQGL (145 aa).

Belongs to the DEAD box helicase family. DDX47/RRP3 subfamily. In terms of assembly, interacts with the SSU processome.

It localises to the nucleus. It catalyses the reaction ATP + H2O = ADP + phosphate + H(+). In terms of biological role, ATP-dependent rRNA helicase required for pre-ribosomal RNA processing. Involved in the maturation of the 35S-pre-rRNA and to its cleavage to mature 18S rRNA. The chain is ATP-dependent rRNA helicase RRP3 from Lodderomyces elongisporus (strain ATCC 11503 / CBS 2605 / JCM 1781 / NBRC 1676 / NRRL YB-4239) (Yeast).